A 1402-amino-acid polypeptide reads, in one-letter code: DNA-directed RNA polymerase subunit beta' (1402 aa).

Zn(2+)-binding residues include cysteine 71, cysteine 73, cysteine 86, and cysteine 89. Residues aspartate 462, aspartate 464, and aspartate 466 each contribute to the Mg(2+) site. 4 residues coordinate Zn(2+): cysteine 811, cysteine 885, cysteine 892, and cysteine 895.

It belongs to the RNA polymerase beta' chain family. The RNAP catalytic core consists of 2 alpha, 1 beta, 1 beta' and 1 omega subunit. When a sigma factor is associated with the core the holoenzyme is formed, which can initiate transcription. Mg(2+) serves as cofactor. Zn(2+) is required as a cofactor.

It catalyses the reaction RNA(n) + a ribonucleoside 5'-triphosphate = RNA(n+1) + diphosphate. Functionally, DNA-dependent RNA polymerase catalyzes the transcription of DNA into RNA using the four ribonucleoside triphosphates as substrates. The protein is DNA-directed RNA polymerase subunit beta' of Rhizobium etli (strain ATCC 51251 / DSM 11541 / JCM 21823 / NBRC 15573 / CFN 42).